The following is a 140-amino-acid chain: MGRVRTKTVKKSSRQVIEKYYSRMTLDFHTNKKILEEVAIIPSKRLRNKIAGFSTHLMKRIQKGPVRGISLKLQEEERERRMDFVPDESAIKTDEIKVDKETLEMLASLGMSDTSGISAVEPQQAMAPIAAFGGRAPRRY.

Belongs to the eukaryotic ribosomal protein eS17 family.

The chain is Small ribosomal subunit protein eS17y (RPS17B) from Arabidopsis thaliana (Mouse-ear cress).